The sequence spans 128 residues: Ribosome-binding factor A (128 aa).

The protein belongs to the RbfA family. Monomer. Binds 30S ribosomal subunits, but not 50S ribosomal subunits or 70S ribosomes.

The protein resides in the cytoplasm. One of several proteins that assist in the late maturation steps of the functional core of the 30S ribosomal subunit. Associates with free 30S ribosomal subunits (but not with 30S subunits that are part of 70S ribosomes or polysomes). Required for efficient processing of 16S rRNA. May interact with the 5'-terminal helix region of 16S rRNA. This chain is Ribosome-binding factor A, found in Idiomarina loihiensis (strain ATCC BAA-735 / DSM 15497 / L2-TR).